The primary structure comprises 122 residues: Bet1-like SNARE 1-1 (122 aa).

Topologically, residues 1-103 are cytoplasmic; it reads MNPRREPRGG…VFETKSSRRM (103 aa). The t-SNARE coiled-coil homology domain maps to 32–94; it reads EINEHENERA…SGTMDRFKTV (63 aa). Position 56 is a phosphoserine (serine 56). A helical; Anchor for type IV membrane protein membrane pass occupies residues 104 to 121; that stretch reads LTLVASFVGLFLVIYYLT. Arginine 122 is a topological domain (vesicular).

This sequence belongs to the BET1 family.

The protein resides in the golgi apparatus membrane. Its subcellular location is the endoplasmic reticulum membrane. In terms of biological role, required for vesicular transport from the ER to the Golgi complex. Functions as a SNARE associated with ER-derived vesicles. This is Bet1-like SNARE 1-1 (BET11) from Arabidopsis thaliana (Mouse-ear cress).